A 283-amino-acid chain; its full sequence is MPVKKIVNRSNSGIHHKISIDYSKVLTTNTPQKSLLAKKKKNSGRNNQGKITVRHRGGGSKRKYRIIDFKRNLHDDKIALVKSIEYDPNRSAFISLIAYENGYRSYILTPQGIKVGDKVVSSSQAIDIKVGNCMPLEFIPEGTMVHNIEMTPGKGAQIARSAGAYAQILGKDDTGKYINLKLGSKEVRKFLKNCRAVVGIASNVDHNLVLLGKAGTTRHKGIRPTVRGSAMNPNDHPHGGGEGRSPVGRDAPRTPWGKRHMGVKTRNNKKSSTQLIIRRRNSK.

Disordered stretches follow at residues Ala37–Gly59 and His219–Lys283. Residues Trp256–Lys269 are compositionally biased toward basic residues.

It belongs to the universal ribosomal protein uL2 family. Part of the 50S ribosomal subunit. Forms a bridge to the 30S subunit in the 70S ribosome.

Functionally, one of the primary rRNA binding proteins. Required for association of the 30S and 50S subunits to form the 70S ribosome, for tRNA binding and peptide bond formation. It has been suggested to have peptidyltransferase activity; this is somewhat controversial. Makes several contacts with the 16S rRNA in the 70S ribosome. The protein is Large ribosomal subunit protein uL2 of Mycoplasmoides gallisepticum (strain R(low / passage 15 / clone 2)) (Mycoplasma gallisepticum).